The primary structure comprises 553 residues: Hydroxylamine reductase (553 aa).

The [2Fe-2S] cluster site is built by cysteine 3, cysteine 6, cysteine 18, and cysteine 25. Histidine 252, glutamate 276, cysteine 320, cysteine 408, cysteine 436, cysteine 461, glutamate 495, and lysine 497 together coordinate hybrid [4Fe-2O-2S] cluster. Cysteine persulfide is present on cysteine 408.

Belongs to the HCP family. It depends on [2Fe-2S] cluster as a cofactor. Hybrid [4Fe-2O-2S] cluster is required as a cofactor.

The protein resides in the cytoplasm. The enzyme catalyses A + NH4(+) + H2O = hydroxylamine + AH2 + H(+). Catalyzes the reduction of hydroxylamine to form NH(3) and H(2)O. This Tolumonas auensis (strain DSM 9187 / NBRC 110442 / TA 4) protein is Hydroxylamine reductase.